A 394-amino-acid chain; its full sequence is Queuine tRNA-ribosyltransferase (394 aa).

The Proton acceptor role is filled by aspartate 99. Residues aspartate 99–phenylalanine 103, aspartate 153, glutamine 195, and glycine 222 contribute to the substrate site. Residues glycine 253–aspartate 259 form an RNA binding region. Catalysis depends on aspartate 272, which acts as the Nucleophile. The tract at residues threonine 277–arginine 281 is RNA binding; important for wobble base 34 recognition. Cysteine 310, cysteine 312, cysteine 315, and histidine 341 together coordinate Zn(2+).

It belongs to the queuine tRNA-ribosyltransferase family. In terms of assembly, homodimer. Within each dimer, one monomer is responsible for RNA recognition and catalysis, while the other monomer binds to the replacement base PreQ1. Zn(2+) is required as a cofactor.

It carries out the reaction 7-aminomethyl-7-carbaguanine + guanosine(34) in tRNA = 7-aminomethyl-7-carbaguanosine(34) in tRNA + guanine. It participates in tRNA modification; tRNA-queuosine biosynthesis. Its function is as follows. Catalyzes the base-exchange of a guanine (G) residue with the queuine precursor 7-aminomethyl-7-deazaguanine (PreQ1) at position 34 (anticodon wobble position) in tRNAs with GU(N) anticodons (tRNA-Asp, -Asn, -His and -Tyr). Catalysis occurs through a double-displacement mechanism. The nucleophile active site attacks the C1' of nucleotide 34 to detach the guanine base from the RNA, forming a covalent enzyme-RNA intermediate. The proton acceptor active site deprotonates the incoming PreQ1, allowing a nucleophilic attack on the C1' of the ribose to form the product. After dissociation, two additional enzymatic reactions on the tRNA convert PreQ1 to queuine (Q), resulting in the hypermodified nucleoside queuosine (7-(((4,5-cis-dihydroxy-2-cyclopenten-1-yl)amino)methyl)-7-deazaguanosine). In Deinococcus radiodurans (strain ATCC 13939 / DSM 20539 / JCM 16871 / CCUG 27074 / LMG 4051 / NBRC 15346 / NCIMB 9279 / VKM B-1422 / R1), this protein is Queuine tRNA-ribosyltransferase.